Here is an 876-residue protein sequence, read N- to C-terminus: Alanine--tRNA ligase (876 aa).

4 residues coordinate Zn(2+): His565, His569, Cys667, and His671.

The protein belongs to the class-II aminoacyl-tRNA synthetase family. It depends on Zn(2+) as a cofactor.

The protein resides in the cytoplasm. It catalyses the reaction tRNA(Ala) + L-alanine + ATP = L-alanyl-tRNA(Ala) + AMP + diphosphate. Catalyzes the attachment of alanine to tRNA(Ala) in a two-step reaction: alanine is first activated by ATP to form Ala-AMP and then transferred to the acceptor end of tRNA(Ala). Also edits incorrectly charged Ser-tRNA(Ala) and Gly-tRNA(Ala) via its editing domain. In Desulfosudis oleivorans (strain DSM 6200 / JCM 39069 / Hxd3) (Desulfococcus oleovorans), this protein is Alanine--tRNA ligase.